A 501-amino-acid chain; its full sequence is Glutamate--tRNA ligase (501 aa).

Residues 10–20 carry the 'HIGH' region motif; it reads PSPTGSLHIGG. The 'KMSKS' region motif lies at 251-255; sequence KLSKR. An ATP-binding site is contributed by lysine 254.

The protein belongs to the class-I aminoacyl-tRNA synthetase family. Glutamate--tRNA ligase type 1 subfamily. Monomer.

It localises to the cytoplasm. It carries out the reaction tRNA(Glu) + L-glutamate + ATP = L-glutamyl-tRNA(Glu) + AMP + diphosphate. Its function is as follows. Catalyzes the attachment of glutamate to tRNA(Glu) in a two-step reaction: glutamate is first activated by ATP to form Glu-AMP and then transferred to the acceptor end of tRNA(Glu). The protein is Glutamate--tRNA ligase of Desulforudis audaxviator (strain MP104C).